We begin with the raw amino-acid sequence, 122 residues long: Small ribosomal subunit protein uS13 (122 aa).

Positions 99-122 are disordered; it reads RGQRTHTNARTRKGPAKAIAGKKK.

It belongs to the universal ribosomal protein uS13 family. In terms of assembly, part of the 30S ribosomal subunit. Forms a loose heterodimer with protein S19. Forms two bridges to the 50S subunit in the 70S ribosome.

Functionally, located at the top of the head of the 30S subunit, it contacts several helices of the 16S rRNA. In the 70S ribosome it contacts the 23S rRNA (bridge B1a) and protein L5 of the 50S subunit (bridge B1b), connecting the 2 subunits; these bridges are implicated in subunit movement. Contacts the tRNAs in the A and P-sites. This Agrobacterium fabrum (strain C58 / ATCC 33970) (Agrobacterium tumefaciens (strain C58)) protein is Small ribosomal subunit protein uS13.